The following is a 546-amino-acid chain: ATP-dependent RNA helicase DBP2 (546 aa).

Positions 1–56 (MTYGGRDQQYNKTNYKSRGGDFRGGRNSDRNSYNDRPQGGNYRGGFGGRSNYNQPQ) are disordered. 2 positions are modified to omega-N-methylarginine: R18 and R43. Basic and acidic residues predominate over residues 18-33 (RGGDFRGGRNSDRNSY). 2 positions are modified to phosphoserine: S88 and S90. The short motif at 113–141 (TTFDEAGFPDYVLNEVKAEGFDKPTGIQC) is the Q motif element. The 176-residue stretch at 144 to 319 (WPMALSGRDM…ADYLNDPIQV (176 aa)) folds into the Helicase ATP-binding domain. Residue 157–164 (AATGSGKT) participates in ATP binding. The short motif at 267-270 (DEAD) is the DEAD box element. Residues 347–494 (RLNKYLETAS…NIPPELLKYD (148 aa)) form the Helicase C-terminal domain. K474 is covalently cross-linked (Glycyl lysine isopeptide (Lys-Gly) (interchain with G-Cter in ubiquitin)). Residues 493 to 546 (YDRRSYGGGHPRYGGGRGGRGGYGRRGGYGGGRGGYGGNRQRDGGWGNRGRSNY) form a disordered region. Residues 498-540 (YGGGHPRYGGGRGGRGGYGRRGGYGGGRGGYGGNRQRDGGWGN) are compositionally biased toward gly residues. Residues 505-530 (YGGGRGGRGGYGRRGGYGGGRGGYGG) are RNA-binding RGG-box. R509, R512, R518, and R525 each carry dimethylated arginine; alternate. Omega-N-methylarginine; alternate is present on residues R509, R512, R518, and R525.

Belongs to the DEAD box helicase family. DDX5/DBP2 subfamily. As to quaternary structure, interacts with UPF1. Associates with polysomes.

The protein localises to the cytoplasm. The protein resides in the nucleus. It catalyses the reaction ATP + H2O = ADP + phosphate + H(+). ATP-dependent RNA helicase involved nonsense-mediated mRNA decay and ribosome biogenesis through rRNA processing. Associates directly with chromatin, correlating with transcriptional activity. Required for assembly of mRNA-binding proteins YRA1, NAB2, and MEX67 onto poly(A)+ RNA. The chain is ATP-dependent RNA helicase DBP2 from Saccharomyces cerevisiae (strain ATCC 204508 / S288c) (Baker's yeast).